Reading from the N-terminus, the 527-residue chain is Butyrophilin subfamily 2 member A1 (527 aa).

The first 28 residues, 1 to 28, serve as a signal peptide directing secretion; that stretch reads MESAAALHFSRPASLLLLLLSLCALVSA. The 113-residue stretch at 29 to 141 folds into the Ig-like V-type domain; sequence QFIVVGPTDP…SYDEAILHLV (113 aa). The Extracellular portion of the chain corresponds to 29 to 248; it reads QFIVVGPTDP…SFMPSVSPCA (220 aa). 3 N-linked (GlcNAc...) asparagine glycosylation sites follow: Asn-46, Asn-114, and Asn-120. Cysteines 51 and 125 form a disulfide. A helical transmembrane segment spans residues 249–269; that stretch reads VALPIIVVILMIPIAVCIYWI. Over 270 to 527 the chain is Cytoplasmic; that stretch reads NKLQKEKKIL…LHRVGTHQSL (258 aa). The 197-residue stretch at 310 to 506 folds into the B30.2/SPRY domain; sequence VKEKLQEELR…IFICPALTGA (197 aa).

It belongs to the immunoglobulin superfamily. BTN/MOG family. As to expression, highly expressed in brain, bone marrow, small intestine, muscle, spleen and pancreas. Moderate expression was seen in lung, liver and kidney.

Its subcellular location is the membrane. The polypeptide is Butyrophilin subfamily 2 member A1 (BTN2A1) (Homo sapiens (Human)).